The primary structure comprises 534 residues: Ankyrin repeat and LEM domain-containing protein 1 (534 aa).

ANK repeat units follow at residues 4–35, 39–71, 75–104, and 108–137; these read TACLALRLLAALREEEARAVEELLRLGADPNL, DGAAAVHLAARASHPRALHCLRMLLRWGADPNA, EGLTPVHVAAAWGCCGALELLLSRGGDPTL, and DGLRPLDWALQQRHHNCARVLQELDTPTQP. The 45-residue stretch at 279 to 323 folds into the LEM domain; the sequence is HSSVPPMSDLQLLQALRALGYSPGPVTPFTRGHYLRRLQEAQASR. Positions 370–485 constitute a GIY-YIG domain; it reads KSSFTYLLLD…ALGLQTLTNQ (116 aa). The Nuclear localization signal signature appears at 498–505; it reads PPSRRRRL.

Interacts (via LEM domain) with BANF1; the interaction may favor BANF1 dimerization. As to expression, predominantly expressed in bone marrow, spleen, thymus, colon and ovary. Expressed also to a lesser extent in lymph nodes, liver and testis.

Its subcellular location is the cytoplasm. It localises to the nucleus. Its function is as follows. Endonuclease that probably plays a role in the DNA damage response and DNA repair. This Mus musculus (Mouse) protein is Ankyrin repeat and LEM domain-containing protein 1.